Consider the following 346-residue polypeptide: Dehydrogenase orf1 (346 aa).

NADP(+) is bound at residue 43–48 (VDYATQ). A substrate-binding site is contributed by 133–140 (LAFSTAIV). NADP(+) is bound by residues 170-173 (ATSV), 193-196 (SPHN), Tyr211, and 251-252 (LN). 269–273 (APPNV) is a binding site for substrate. Residue 336–337 (VS) participates in NADP(+) binding.

This sequence belongs to the zinc-containing alcohol dehydrogenase family.

Its pathway is secondary metabolite biosynthesis. Functionally, dehydrogenase; part of the gene cluster that mediates the biosynthesis of nigerpyrone and its derivatives carbonarone A and pestalamide A. The biosynthesis pathway begins with the polyketide assembly by epaA to form phenylacetyl triketide precursor from successive condensation of two malonyl-CoA, presumably with one phenylacetyl-CoA starter unit produced by the phenylacetyl-CoA ligase epaB. For the nigerpyrone biosynthesis, the reactive polyketide chain is released as an aldehyde through the R-domain. A nonenzymatic cyclization and dehydration may create nigerpyrone. For the biosynthesis of carbonarone A and pestalamide A, an extra methyl group is added through the C-methyltransferase domain. Several further steps involving the dehydrogenase orf1, the cytochrome P450 monooxygenase orf2 and the FAD-dependent monooxygenase orf3 are required to form a carbonarone A precursor which is converted to carbonarone A via cyclization. The O-acetyltransferase epaC could catalyze the transfer of 2-methylsuccinyl-CoA, a common intermediate in the ethylmalonyl-CoA pathway, to generate the final product pestalamide A. The chain is Dehydrogenase orf1 from Aspergillus niger (strain ATCC MYA-4892 / CBS 513.88 / FGSC A1513).